Here is a 196-residue protein sequence, read N- to C-terminus: Flagellin B2 (196 aa).

A propeptide spanning residues 1 to 12 is cleaved from the precursor; it reads MFEFITDEDERG.

The protein belongs to the archaeal flagellin family. In terms of processing, glycosylated.

Its subcellular location is the archaeal flagellum. Its function is as follows. Flagellin is the subunit protein which polymerizes to form the filaments of archaeal flagella. This Halobacterium salinarum (strain ATCC 700922 / JCM 11081 / NRC-1) (Halobacterium halobium) protein is Flagellin B2 (flaB2).